The sequence spans 182 residues: ATP synthase subunit delta (182 aa).

The protein belongs to the ATPase delta chain family. F-type ATPases have 2 components, F(1) - the catalytic core - and F(0) - the membrane proton channel. F(1) has five subunits: alpha(3), beta(3), gamma(1), delta(1), epsilon(1). CF(0) has four main subunits: a(1), b(1), b'(1) and c(10-14). The alpha and beta chains form an alternating ring which encloses part of the gamma chain. F(1) is attached to F(0) by a central stalk formed by the gamma and epsilon chains, while a peripheral stalk is formed by the delta, b and b' chains.

It is found in the cellular thylakoid membrane. F(1)F(0) ATP synthase produces ATP from ADP in the presence of a proton or sodium gradient. F-type ATPases consist of two structural domains, F(1) containing the extramembraneous catalytic core and F(0) containing the membrane proton channel, linked together by a central stalk and a peripheral stalk. During catalysis, ATP synthesis in the catalytic domain of F(1) is coupled via a rotary mechanism of the central stalk subunits to proton translocation. Its function is as follows. This protein is part of the stalk that links CF(0) to CF(1). It either transmits conformational changes from CF(0) to CF(1) or is implicated in proton conduction. This chain is ATP synthase subunit delta, found in Prochlorococcus marinus (strain MIT 9303).